The chain runs to 79 residues: ATP synthase subunit beta (79 aa).

Belongs to the ATPase alpha/beta chains family. In terms of assembly, F-type ATPases have 2 components, CF(1) - the catalytic core - and CF(0) - the membrane proton channel. CF(1) has five subunits: alpha(3), beta(3), gamma(1), delta(1), epsilon(1). CF(0) has three main subunits: a(1), b(2) and c(9-12). The alpha and beta chains form an alternating ring which encloses part of the gamma chain. CF(1) is attached to CF(0) by a central stalk formed by the gamma and epsilon chains, while a peripheral stalk is formed by the delta and b chains.

It localises to the cell membrane. It catalyses the reaction ATP + H2O + 4 H(+)(in) = ADP + phosphate + 5 H(+)(out). Functionally, produces ATP from ADP in the presence of a proton gradient across the membrane. The catalytic sites are hosted primarily by the beta subunits. The protein is ATP synthase subunit beta (atpD) of Streptococcus downei (Streptococcus sobrinus).